Consider the following 321-residue polypeptide: Sex-lethal homolog (321 aa).

2 consecutive RRM domains span residues 78–156 (TNLI…FARP) and 164–244 (TNLY…VAEE).

Expressed in gonads and somatic tissues of both sexes. In the ovary, expressed in the last egg chamber of each ovariole. Highly expressed in nurse cells with low expression found in oocytes. Highly expressed in testis with lower expression in testis sheath and vas deferentia.

The protein resides in the nucleus. In terms of biological role, unknown; apparently not involved in somatic sex determination. The sequence is that of Sex-lethal homolog (SXL) from Megaselia scalaris (Humpbacked fly).